A 239-amino-acid chain; its full sequence is tRNA (guanine-N(7)-)-methyltransferase (239 aa).

S-adenosyl-L-methionine contacts are provided by glutamate 68, glutamate 93, aspartate 120, and aspartate 143. Aspartate 143 is a catalytic residue. Substrate-binding positions include lysine 147, aspartate 180, and 217-220 (TKFE).

Belongs to the class I-like SAM-binding methyltransferase superfamily. TrmB family.

It carries out the reaction guanosine(46) in tRNA + S-adenosyl-L-methionine = N(7)-methylguanosine(46) in tRNA + S-adenosyl-L-homocysteine. It participates in tRNA modification; N(7)-methylguanine-tRNA biosynthesis. Its function is as follows. Catalyzes the formation of N(7)-methylguanine at position 46 (m7G46) in tRNA. The polypeptide is tRNA (guanine-N(7)-)-methyltransferase (Vibrio vulnificus (strain CMCP6)).